The following is a 1793-amino-acid chain: Chitin synthase 5 (1793 aa).

Positions 1–28 (MTNPRMSMYSLASEAPGGNRGTGQQSTQ) are disordered. 5 N-linked (GlcNAc...) asparagine glycosylation sites follow: Asn-70, Asn-164, Asn-638, Asn-664, and Asn-669. Helical transmembrane passes span 750 to 770 (VWVFIVWAFTWWIPSPLLRYV) and 786 to 806 (LVLCFFIFLMNALIVFWIVAF). Residues 815–877 (DKAYSQKEVD…GMNLDDYFVA (63 aa)) enclose the Cytochrome b5 heme-binding domain. 3 N-linked (GlcNAc...) asparagine glycosylation sites follow: Asn-897, Asn-1019, and Asn-1023. Residues 1056–1076 (LLLAFSIMLCAVILLKFVSAL) traverse the membrane as a helical segment. An N-linked (GlcNAc...) asparagine glycan is attached at Asn-1421. A run of 3 helical transmembrane segments spans residues 1452–1472 (LFGTIILPATCVYLGYLIYLV), 1479–1499 (FPLISIIMLAAVYGLQALIFI), and 1507–1527 (IGWMIIYILAFPIYSFVLPIY). N-linked (GlcNAc...) asparagine glycans are attached at residues Asn-1534 and Asn-1705. The DEK-C domain occupies 1735–1791 (GPDDGMIVEAIRTVLMEVDLDTVTKKQVRALVEQRLQSELVGERRTFMDRQIDHELA).

It belongs to the chitin synthase family. Class V subfamily.

The protein resides in the cell membrane. It catalyses the reaction [(1-&gt;4)-N-acetyl-beta-D-glucosaminyl](n) + UDP-N-acetyl-alpha-D-glucosamine = [(1-&gt;4)-N-acetyl-beta-D-glucosaminyl](n+1) + UDP + H(+). Its function is as follows. Polymerizes chitin, a structural polymer of the cell wall and septum, by transferring the sugar moiety of UDP-GlcNAc to the non-reducing end of the growing chitin polymer. Regulates Germination and Tolerance to Hyperosmotic Stress. Plays a key role in pathogenicity. Likely contributes to post-penetration virulence. This Verticillium dahliae (strain VdLs.17 / ATCC MYA-4575 / FGSC 10137) (Verticillium wilt) protein is Chitin synthase 5.